Here is a 392-residue protein sequence, read N- to C-terminus: Histidinol-phosphate aminotransferase (392 aa).

The tract at residues 1-24 (MSAVLKDPIPAPGRPESTRPEPRP) is disordered. At K236 the chain carries N6-(pyridoxal phosphate)lysine.

The protein belongs to the class-II pyridoxal-phosphate-dependent aminotransferase family. Histidinol-phosphate aminotransferase subfamily. In terms of assembly, homodimer. It depends on pyridoxal 5'-phosphate as a cofactor.

It catalyses the reaction L-histidinol phosphate + 2-oxoglutarate = 3-(imidazol-4-yl)-2-oxopropyl phosphate + L-glutamate. It functions in the pathway amino-acid biosynthesis; L-histidine biosynthesis; L-histidine from 5-phospho-alpha-D-ribose 1-diphosphate: step 7/9. This chain is Histidinol-phosphate aminotransferase, found in Xanthobacter autotrophicus (strain ATCC BAA-1158 / Py2).